A 71-amino-acid chain; its full sequence is Translation initiation factor IF-1 (71 aa).

In terms of domain architecture, S1-like spans Met1–His71.

It belongs to the IF-1 family. In terms of assembly, component of the 30S ribosomal translation pre-initiation complex which assembles on the 30S ribosome in the order IF-2 and IF-3, IF-1 and N-formylmethionyl-tRNA(fMet); mRNA recruitment can occur at any time during PIC assembly.

The protein resides in the cytoplasm. Functionally, one of the essential components for the initiation of protein synthesis. Stabilizes the binding of IF-2 and IF-3 on the 30S subunit to which N-formylmethionyl-tRNA(fMet) subsequently binds. Helps modulate mRNA selection, yielding the 30S pre-initiation complex (PIC). Upon addition of the 50S ribosomal subunit IF-1, IF-2 and IF-3 are released leaving the mature 70S translation initiation complex. The sequence is that of Translation initiation factor IF-1 from Rickettsia felis (strain ATCC VR-1525 / URRWXCal2) (Rickettsia azadi).